The primary structure comprises 153 residues: MATKIRLKRQGKKFYAFYRVVVVDSRKKRDGKVIEEIGTYNPNTQPSTIQIKSDRAQYWLGVGAQPSEPVFKLLNITGDWQKYKGLEGAEGTLKTVEAGPDAEARIAAVEDQAQKLKAAKSEAAAKAKAEAEAAAAAEEAPAEEAAEEAPAEA.

Residues 130 to 153 (EAEAAAAAEEAPAEEAAEEAPAEA) form a disordered region. Residues 140–153 (APAEEAAEEAPAEA) are compositionally biased toward acidic residues.

This sequence belongs to the bacterial ribosomal protein bS16 family.

This chain is Small ribosomal subunit protein bS16, found in Bifidobacterium longum (strain NCC 2705).